Here is a 343-residue protein sequence, read N- to C-terminus: Flap endonuclease 1 (343 aa).

The interval 1-98 (MGVPIGELIP…KELEKRREAR (98 aa)) is N-domain. Asp27, Asp80, Glu152, Glu154, Asp173, Asp175, and Asp236 together coordinate Mg(2+). An I-domain region spans residues 116–258 (EARKYAQRAT…KALEIVKYSK (143 aa)). Residues 330–338 (KQSTLESWF) form an interaction with PCNA region.

The protein belongs to the XPG/RAD2 endonuclease family. FEN1 subfamily. As to quaternary structure, interacts with PCNA. PCNA stimulates the nuclease activity without altering cleavage specificity. Mg(2+) serves as cofactor.

Structure-specific nuclease with 5'-flap endonuclease and 5'-3' exonuclease activities involved in DNA replication and repair. During DNA replication, cleaves the 5'-overhanging flap structure that is generated by displacement synthesis when DNA polymerase encounters the 5'-end of a downstream Okazaki fragment. Binds the unpaired 3'-DNA end and kinks the DNA to facilitate 5' cleavage specificity. Cleaves one nucleotide into the double-stranded DNA from the junction in flap DNA, leaving a nick for ligation. Also involved in the base excision repair (BER) pathway. Acts as a genome stabilization factor that prevents flaps from equilibrating into structures that lead to duplications and deletions. Also possesses 5'-3' exonuclease activity on nicked or gapped double-stranded DNA. In Pyrococcus abyssi (strain GE5 / Orsay), this protein is Flap endonuclease 1.